The sequence spans 680 residues: 1-deoxy-D-xylulose-5-phosphate synthase (680 aa).

Thiamine diphosphate contacts are provided by residues His113 and 154–156; that span reads GHS. Residue Asp185 coordinates Mg(2+). Thiamine diphosphate-binding positions include 186 to 187, Asn214, Phe323, and Glu408; that span reads GA. Asn214 lines the Mg(2+) pocket.

Belongs to the transketolase family. DXPS subfamily. Homodimer. Mg(2+) is required as a cofactor. It depends on thiamine diphosphate as a cofactor.

The catalysed reaction is D-glyceraldehyde 3-phosphate + pyruvate + H(+) = 1-deoxy-D-xylulose 5-phosphate + CO2. The protein operates within metabolic intermediate biosynthesis; 1-deoxy-D-xylulose 5-phosphate biosynthesis; 1-deoxy-D-xylulose 5-phosphate from D-glyceraldehyde 3-phosphate and pyruvate: step 1/1. In terms of biological role, catalyzes the acyloin condensation reaction between C atoms 2 and 3 of pyruvate and glyceraldehyde 3-phosphate to yield 1-deoxy-D-xylulose-5-phosphate (DXP). In Psychrobacter arcticus (strain DSM 17307 / VKM B-2377 / 273-4), this protein is 1-deoxy-D-xylulose-5-phosphate synthase.